The chain runs to 475 residues: Ankyrin repeat, SAM and basic leucine zipper domain-containing protein 1 (475 aa).

The segment at 1-25 (MAAGALRGLPVAGGGESSESEDDGW) is disordered. Phosphoserine occurs at positions 17, 18, and 20. ANK repeat units follow at residues 45 to 74 (EKKEKFKKAMTIGDVSLVQELLDSGISVDS), 78 to 107 (YGWTPLMYAASVANAELVRVLLDRGANASF), 110 to 144 (DKQSILITACSARGSEEQILKCVELLLSRNADPNV), 148 to 177 (RLMTPIMYAARDGHTQVVALLVAHGAEVNT), 181 to 210 (NGYTALTWAARQGHKNIVLKLLELGANKML), and 214 to 243 (DGKMPSEIAKRNKHHEIFNLLSFTLNPLEG). Residues 272 to 334 (SYTAFGDLEV…KILAALKELQ (63 aa)) enclose the SAM domain.

In terms of assembly, interacts with DDX4, PIWIL1, RANBP9 and TDRD1.

The protein resides in the cytoplasm. Functionally, plays a central role during spermatogenesis by repressing transposable elements and preventing their mobilization, which is essential for the germline integrity. Acts via the piRNA metabolic process, which mediates the repression of transposable elements during meiosis by forming complexes composed of piRNAs and Piwi proteins and governs the methylation and subsequent repression of transposons. Its association with pi-bodies suggests a participation in the primary piRNAs metabolic process. Required prior to the pachytene stage to facilitate the production of multiple types of piRNAs, including those associated with repeats involved in the regulation of retrotransposons. May act by mediating protein-protein interactions during germ cell maturation. The protein is Ankyrin repeat, SAM and basic leucine zipper domain-containing protein 1 (ASZ1) of Pongo abelii (Sumatran orangutan).